Here is a 318-residue protein sequence, read N- to C-terminus: Pseudouridine-5'-phosphate glycosidase 1 (318 aa).

Glu29 (proton donor) is an active-site residue. Substrate-binding residues include Lys90 and Val110. Position 142 (Asp142) interacts with Mn(2+). 144–146 (SAD) is a substrate binding site. Lys163 functions as the Nucleophile in the catalytic mechanism.

This sequence belongs to the pseudouridine-5'-phosphate glycosidase family. In terms of assembly, homotrimer. Mn(2+) is required as a cofactor.

The enzyme catalyses D-ribose 5-phosphate + uracil = psi-UMP + H2O. Catalyzes the reversible cleavage of pseudouridine 5'-phosphate (PsiMP) to ribose 5-phosphate and uracil. Functions biologically in the cleavage direction, as part of a pseudouridine degradation pathway. In Photorhabdus laumondii subsp. laumondii (strain DSM 15139 / CIP 105565 / TT01) (Photorhabdus luminescens subsp. laumondii), this protein is Pseudouridine-5'-phosphate glycosidase 1.